A 251-amino-acid chain; its full sequence is Triosephosphate isomerase (251 aa).

9-11 (NWK) lines the substrate pocket. Residue H95 is the Electrophile of the active site. E167 acts as the Proton acceptor in catalysis. Substrate is bound by residues G173, S212, and 233 to 234 (GG).

The protein belongs to the triosephosphate isomerase family. In terms of assembly, homodimer.

It is found in the cytoplasm. The enzyme catalyses D-glyceraldehyde 3-phosphate = dihydroxyacetone phosphate. Its pathway is carbohydrate biosynthesis; gluconeogenesis. The protein operates within carbohydrate degradation; glycolysis; D-glyceraldehyde 3-phosphate from glycerone phosphate: step 1/1. Involved in the gluconeogenesis. Catalyzes stereospecifically the conversion of dihydroxyacetone phosphate (DHAP) to D-glyceraldehyde-3-phosphate (G3P). This is Triosephosphate isomerase from Vibrio sp. (strain ANT-300).